Consider the following 361-residue polypeptide: MALSMDNIVISNEEEIYMMKAMHIPCGLYLNMVLKAAIELDLFEIIAKSTTQKLSSYEIASQIPTKNPNASSLVLERILRFLASQSFLTCNITKNDDGIVHTSYNLTPLSQSLISDKDGSSIAPFLLLATDPVAVNSWFHFKDAILEGEIPFNKAHGVHAFEYHGKDSRMNGLFNRAMQNVTCTEMKRIVECYNGFQGVKEIIDVGGGLGISLATIISKYPNIKGINFDLPHVIKDAPTYEGIEHVGGDMFKSVPQRELILLKAILHDWDDEYCVKILKNCWRALPKDGKVVVIEQMQPEYPETNLISKNSSSVDMLMMTMLDGGKERTKQQFEDLAKQAGFTVFKIVARAYYCWVIELYK.

Asp229 is a binding site for S-adenosyl-L-methionine. His267 acts as the Proton acceptor in catalysis.

This sequence belongs to the class I-like SAM-binding methyltransferase superfamily. Cation-independent O-methyltransferase family. In terms of assembly, homodimer. Mainly expressed in leaves secreting glandular trichomes types 1 and 4 and, to a lesser extent, in storage trichomes type 6.

It catalyses the reaction kaempferol + S-adenosyl-L-methionine = 3-O-methylkaempferol + S-adenosyl-L-homocysteine + H(+). The enzyme catalyses quercetin + S-adenosyl-L-methionine = 3',4',5,7-tetrahydroxy-3-methoxyflavone + S-adenosyl-L-homocysteine + H(+). It carries out the reaction myricetin + S-adenosyl-L-methionine = 3-O-methylmyricetin + S-adenosyl-L-homocysteine + H(+). The catalysed reaction is kaempferide + S-adenosyl-L-methionine = 3,4'-O-dimethylkaempferol + S-adenosyl-L-homocysteine + H(+). It catalyses the reaction isorhamnetin + S-adenosyl-L-methionine = 3,3'-O-dimethylquercetin + S-adenosyl-L-homocysteine + H(+). The enzyme catalyses rhamnetin + S-adenosyl-L-methionine = 3',4',5-trihydroxy-3,7-dimethoxyflavone + S-adenosyl-L-homocysteine + H(+). It carries out the reaction laricitrin + S-adenosyl-L-methionine = 3,3'-O-dimethylmyricetin + S-adenosyl-L-homocysteine + H(+). The catalysed reaction is syringetin + S-adenosyl-L-methionine = 3,3',5'-O-trimethylmyricetin + S-adenosyl-L-homocysteine + H(+). Its pathway is flavonoid metabolism. Flavonoid 3-O-methyltransferase involved in the biosynthesis of polymethoxylated flavonoids natural products such as myricetin derivatives, aroma compounds possessing antioxidant properties and exhibiting pharmacological activities such as anti-carcinogen, anti-viral, anti-thrombotic, anti-diabetic, anti-atherosclerotic, and anti-inflammatory effects. Catalyzes S-adenosylmethionine-dependent regioselective 3-O-methylation of flavonoids; active on various hydroxylated flavonoid substrates. Active with myricetin, quercetin, kaempferol, 4'-methyl kaempferol (kaempferide), 3'-methyl quercetin (isorhamnetin), 7-methyl quercetin (rhamnetin), 3'-methyl myricetin (laricitrin) and 3',5'-dimethyl myricetin (syringetin), thus producing 3-methyl myricetin, 3-methyl quercetin, 3-methyl kaempferol, 4',3-methyl kaempferol, 3',3-methyl quercetin, 7,3-dimethyl quercetin, 3',3-dimethyl myricetin and 3',5',3-dimethyl myricetin, respectively. Inactive with flavonol substrates methylated at the 3-hydroxyl position such as 3-O-methyl quercetin. The chain is Myricetin 3-O-methyltransferase 3 from Solanum habrochaites (Wild tomato).